We begin with the raw amino-acid sequence, 156 residues long: Transcription antitermination protein NusB (156 aa).

The protein belongs to the NusB family.

Involved in transcription antitermination. Required for transcription of ribosomal RNA (rRNA) genes. Binds specifically to the boxA antiterminator sequence of the ribosomal RNA (rrn) operons. The polypeptide is Transcription antitermination protein NusB (Rickettsia bellii (strain OSU 85-389)).